The chain runs to 467 residues: Argininosuccinate lyase (467 aa).

This sequence belongs to the lyase 1 family. Argininosuccinate lyase subfamily.

The protein resides in the cytoplasm. It carries out the reaction 2-(N(omega)-L-arginino)succinate = fumarate + L-arginine. The protein operates within amino-acid biosynthesis; L-arginine biosynthesis; L-arginine from L-ornithine and carbamoyl phosphate: step 3/3. The chain is Argininosuccinate lyase from Thioalkalivibrio sulfidiphilus (strain HL-EbGR7).